The chain runs to 893 residues: DNA mismatch repair protein MutS (893 aa).

637–644 contacts ATP; the sequence is GPNMGGKS.

This sequence belongs to the DNA mismatch repair MutS family.

This protein is involved in the repair of mismatches in DNA. It is possible that it carries out the mismatch recognition step. This protein has a weak ATPase activity. This chain is DNA mismatch repair protein MutS, found in Burkholderia thailandensis (strain ATCC 700388 / DSM 13276 / CCUG 48851 / CIP 106301 / E264).